A 291-amino-acid polypeptide reads, in one-letter code: Elongation factor Ts (291 aa).

The interval 79 to 82 (TDFV) is involved in Mg(2+) ion dislocation from EF-Tu.

Belongs to the EF-Ts family.

The protein resides in the cytoplasm. In terms of biological role, associates with the EF-Tu.GDP complex and induces the exchange of GDP to GTP. It remains bound to the aminoacyl-tRNA.EF-Tu.GTP complex up to the GTP hydrolysis stage on the ribosome. This chain is Elongation factor Ts, found in Anaplasma marginale (strain Florida).